Consider the following 441-residue polypeptide: Malate dehydrogenase [NADP], chloroplastic (441 aa).

The transit peptide at 1–58 directs the protein to the chloroplast; that stretch reads MALTQLNSTCSKPQLHSSSQLSFLSRTRTRTLPRHYHSTFAPLHRTQHARISCSVAPN. Cysteine 76 and cysteine 81 are joined by a disulfide. 105-111 contacts NADP(+); sequence GAAGMIS. Residues arginine 186 and arginine 192 each contribute to the substrate site. An NADP(+)-binding site is contributed by asparagine 199. NAD(+) is bound at residue glutamine 206. 223–225 contributes to the NADP(+) binding site; sequence VGN. Residues asparagine 225 and arginine 256 each coordinate substrate. Histidine 281 acts as the Proton acceptor in catalysis. A disulfide bond links cysteine 417 and cysteine 429.

This sequence belongs to the LDH/MDH superfamily. MDH type 2 family. As to quaternary structure, homodimer.

The protein resides in the plastid. It is found in the chloroplast. The enzyme catalyses (S)-malate + NADP(+) = oxaloacetate + NADPH + H(+). Chloroplast NADP-MDH is activated upon illumination. In order to be enzymatically active, disulfide bridges on the protein must be reduced by thioredoxin which receives electrons from ferredoxin and the electron transport system of photosynthesis. Its function is as follows. The chloroplastic, NADP-dependent form is essential for the photosynthesis C4 cycle, which allows plants to circumvent the problem of photorespiration. In C4 plants, NADP-MDH activity acts to convert oxaloacetate to malate in chloroplasts of mesophyll cells for transport to the bundle sheath cells. The protein is Malate dehydrogenase [NADP], chloroplastic of Pisum sativum (Garden pea).